A 514-amino-acid chain; its full sequence is Lysine--tRNA ligase (514 aa).

Residues Glu-422 and Glu-429 each contribute to the Mg(2+) site.

Belongs to the class-II aminoacyl-tRNA synthetase family. Homodimer. The cofactor is Mg(2+).

The protein resides in the cytoplasm. It catalyses the reaction tRNA(Lys) + L-lysine + ATP = L-lysyl-tRNA(Lys) + AMP + diphosphate. The sequence is that of Lysine--tRNA ligase from Psychrobacter arcticus (strain DSM 17307 / VKM B-2377 / 273-4).